The sequence spans 165 residues: Transmembrane protein 253 (165 aa).

3 helical membrane passes run 31 to 51, 60 to 80, and 91 to 111; these read LVLA…AVSV, MTTA…IVTL, and LAGL…GVLV. Positions 145-165 are disordered; it reads EEVPELETGPTVASTAKRTNQ. Residues 155 to 165 show a composition bias toward polar residues; the sequence is TVASTAKRTNQ.

It is found in the membrane. In Bos taurus (Bovine), this protein is Transmembrane protein 253 (TMEM253).